Reading from the N-terminus, the 336-residue chain is Holliday junction branch migration complex subunit RuvB (336 aa).

Residues 4-184 (ADRLISAGAT…FGIVQRLEFY (181 aa)) are large ATPase domain (RuvB-L). Residues Ile-23, Arg-24, Gly-65, Lys-68, Thr-69, Thr-70, 131-133 (EDY), Arg-174, Tyr-184, and Arg-221 contribute to the ATP site. Thr-69 is a Mg(2+) binding site. The tract at residues 185-255 (QVPDLQHIVG…IAAQALDMLN (71 aa)) is small ATPAse domain (RuvB-S). Residues 258-336 (AEGFDYMDRK…HFGITPPEMP (79 aa)) are head domain (RuvB-H). The DNA site is built by Arg-294, Arg-313, and Arg-318.

Belongs to the RuvB family. As to quaternary structure, homohexamer. Forms an RuvA(8)-RuvB(12)-Holliday junction (HJ) complex. HJ DNA is sandwiched between 2 RuvA tetramers; dsDNA enters through RuvA and exits via RuvB. An RuvB hexamer assembles on each DNA strand where it exits the tetramer. Each RuvB hexamer is contacted by two RuvA subunits (via domain III) on 2 adjacent RuvB subunits; this complex drives branch migration. In the full resolvosome a probable DNA-RuvA(4)-RuvB(12)-RuvC(2) complex forms which resolves the HJ.

It localises to the cytoplasm. It carries out the reaction ATP + H2O = ADP + phosphate + H(+). Functionally, the RuvA-RuvB-RuvC complex processes Holliday junction (HJ) DNA during genetic recombination and DNA repair, while the RuvA-RuvB complex plays an important role in the rescue of blocked DNA replication forks via replication fork reversal (RFR). RuvA specifically binds to HJ cruciform DNA, conferring on it an open structure. The RuvB hexamer acts as an ATP-dependent pump, pulling dsDNA into and through the RuvAB complex. RuvB forms 2 homohexamers on either side of HJ DNA bound by 1 or 2 RuvA tetramers; 4 subunits per hexamer contact DNA at a time. Coordinated motions by a converter formed by DNA-disengaged RuvB subunits stimulates ATP hydrolysis and nucleotide exchange. Immobilization of the converter enables RuvB to convert the ATP-contained energy into a lever motion, pulling 2 nucleotides of DNA out of the RuvA tetramer per ATP hydrolyzed, thus driving DNA branch migration. The RuvB motors rotate together with the DNA substrate, which together with the progressing nucleotide cycle form the mechanistic basis for DNA recombination by continuous HJ branch migration. Branch migration allows RuvC to scan DNA until it finds its consensus sequence, where it cleaves and resolves cruciform DNA. This Salmonella choleraesuis (strain SC-B67) protein is Holliday junction branch migration complex subunit RuvB.